The primary structure comprises 152 residues: Superoxide dismutase [Cu-Zn] (152 aa).

3 residues coordinate Cu cation: histidine 45, histidine 47, and histidine 62. The cysteines at positions 56 and 145 are disulfide-linked. Residues histidine 62, histidine 70, histidine 79, and aspartate 82 each coordinate Zn(2+). Cu cation is bound at residue histidine 119.

This sequence belongs to the Cu-Zn superoxide dismutase family. Homodimer. Cu cation serves as cofactor. Zn(2+) is required as a cofactor.

The protein resides in the cytoplasm. It carries out the reaction 2 superoxide + 2 H(+) = H2O2 + O2. Functionally, destroys radicals which are normally produced within the cells and which are toxic to biological systems. The protein is Superoxide dismutase [Cu-Zn] (SODCC) of Capsicum annuum (Capsicum pepper).